The primary structure comprises 376 residues: DNA-directed RNA polymerase subunit alpha (376 aa).

The tract at residues 1–259 (MSDCSQNLLY…KHFSIFEKMD (259 aa)) is alpha N-terminal domain (alpha-NTD). Residues 276–376 (KDDILHKLVL…DKIRSKNGKG (101 aa)) are alpha C-terminal domain (alpha-CTD).

This sequence belongs to the RNA polymerase alpha chain family. In terms of assembly, homodimer. The RNAP catalytic core consists of 2 alpha, 1 beta, 1 beta' and 1 omega subunit. When a sigma factor is associated with the core the holoenzyme is formed, which can initiate transcription.

It catalyses the reaction RNA(n) + a ribonucleoside 5'-triphosphate = RNA(n+1) + diphosphate. Its function is as follows. DNA-dependent RNA polymerase catalyzes the transcription of DNA into RNA using the four ribonucleoside triphosphates as substrates. This chain is DNA-directed RNA polymerase subunit alpha, found in Chlamydia abortus (strain DSM 27085 / S26/3) (Chlamydophila abortus).